The chain runs to 353 residues: MRPARALIDLDALRHNYHLARSRHGGRALAVVKANAYGHGAAQCARALAADADGFAVGFLEEALELRAAGIDQPILLLEGVFAPAELDEVVRHDLWIVVHHAEQLRIIDHARPALPLEVWLKMNSGMNRAGFLSHELRPAWQRLKDSGKVGGITLMTHFARADEPQVLATTEQLTAFDTATRELPGPRSLANSGAILGWPAAHRDWARPGILLYGADPMPDEPNGLRPVMTLESAVIAVREIPAGAPLGYGARFHAERATRAGLVALGYADGYPRSVPNGTPVAVDGLRTRLIGRVSMDLLTIDLTDLPDAGLGSRVELWGANIPVNRIAQAAKTISYELLCNVKRVRFEYSG.

Lys33 acts as the Proton acceptor; specific for D-alanine in catalysis. Lys33 carries the post-translational modification N6-(pyridoxal phosphate)lysine. Residue Arg129 coordinates substrate. The Proton acceptor; specific for L-alanine role is filled by Tyr250. A substrate-binding site is contributed by Met298.

It belongs to the alanine racemase family. Pyridoxal 5'-phosphate is required as a cofactor.

The catalysed reaction is L-alanine = D-alanine. The protein operates within amino-acid biosynthesis; D-alanine biosynthesis; D-alanine from L-alanine: step 1/1. Catalyzes the interconversion of L-alanine and D-alanine. May also act on other amino acids. The protein is Alanine racemase (alr) of Aromatoleum aromaticum (strain DSM 19018 / LMG 30748 / EbN1) (Azoarcus sp. (strain EbN1)).